The primary structure comprises 180 residues: MLGEGSDFFDQGGYKFLRCYNNESIGFTVVMNLRANISAKPYYVGTETKYGELLPKNKFYATKAKVSRIKTIDEMDVPDKFFDEFQCYAYDGTKLKKFFPGQTIRNMNFYRDSEDIYEDIVDVRLENQSLEEQLEDFKECSRALKKYDNFWRSDRAKYLKLQEHCDNEYNRVLDKINNKK.

Residues 114 to 147 adopt a coiled-coil conformation; it reads EDIYEDIVDVRLENQSLEEQLEDFKECSRALKKY.

This sequence belongs to the mimivirus L74/L77/R857 family.

This is an uncharacterized protein from Acanthamoeba polyphaga mimivirus (APMV).